A 305-amino-acid polypeptide reads, in one-letter code: RNA-binding protein with serine-rich domain 1 (305 aa).

Positions 1 to 10 (MDLSGVKKKS) are enriched in basic residues. A necessary for interaction with SRP54, nuclear localization and exon-skipping region spans residues 1–161 (MDLSGVKKKS…KRRSPSPKPT (161 aa)). The tract at residues 1-170 (MDLSGVKKKS…TKVHIGRLTR (170 aa)) is disordered. The tract at residues 1-220 (MDLSGVKKKS…ENPDEAEKAL (220 aa)) is necessary for interaction with the cleaved p110 isoform of CDC2L1. Glycyl lysine isopeptide (Lys-Gly) (interchain with G-Cter in SUMO2) cross-links involve residues Lys-7 and Lys-15. The span at 33–59 (DRSDEKSKDRSKDKGATKESSEKDRGR) shows a compositional bias: basic and acidic residues. Ser-53 is subject to Phosphoserine; by CK2. Residues 68–126 (ASSGSSSTRSRSSSTSSSGSSTSTGSSSGSSSSSASSRSGSSSTSRSSSSSSSSGSPSP) show a composition bias toward low complexity. The interval 69–121 (SSGSSSTRSRSSSTSSSGSSTSTGSSSGSSSSSASSRSGSSSTSRSSSSSSSS) is necessary for interactions with UPF2 and UPF3B and UPF2-dependent NMD. Composition is skewed to basic residues over residues 127 to 143 (SRRRHDNRRRSRSKSKP) and 151 to 167 (RKRRSPSPKPTKVHIGR). Residues Ser-155 and Ser-157 each carry the phosphoserine modification. The necessary for interaction with PNN and exon-skipping stretch occupies residues 156–242 (PSPKPTKVHI…ITATAVLAPW (87 aa)). Residues 159–244 (KPTKVHIGRL…ATAVLAPWPR (86 aa)) are interaction with SAP18 and ACIN1. Thr-161 carries the phosphothreonine modification. An RRM domain is found at 161–240 (TKVHIGRLTR…QEITATAVLA (80 aa)). Lys-218 bears the N6-acetyllysine mark. Positions 238-305 (VLAPWPRPPP…RSRSSSNSSR (68 aa)) are necessary for interaction with TRA2B, nuclear localization and exon-skipping. A disordered region spans residues 240 to 305 (APWPRPPPRR…RSRSSSNSSR (66 aa)). A compositionally biased stretch (pro residues) spans 242-262 (WPRPPPRRFSPPRRMLPPPPM). Basic residues predominate over residues 266–298 (SPPRMRRRSRSPRRRSPVRRRSRSPGRRRHRSR).

The protein belongs to the splicing factor SR family. In terms of assembly, found in mRNA splicing-dependent exon junction complexes (EJC). Found in a post-splicing complex with NXF1, RBM8A, UPF1, UPF2, UPF3A, UPF3B and RNPS1. Component of the heterotrimeric ASAP (apoptosis- and splicing-associated protein) and PSAP complexes consisting of RNPS1, SAP18 and either ACIN1 or PNN, respectively; the ASAP and PSAP complexes probably are formed mutually exclusive. Component of the active spliceosome. Associates with polysomes. Interacts with the cleaved p110 isoform of CDC2L1, CSNK2A1, PNN, SART3, SRP54, SRRM1 and TRA2B/SFRS10. Post-translationally, phosphorylated on one or more of the four Ser/Thr residues (Ser-43, Thr-49, Ser-52 or Ser-53). Ser-53 phosphorylation site is important for splicing and translation stimulation activity in vitro. As to expression, ubiquitous.

It is found in the nucleus. The protein localises to the nucleus speckle. The protein resides in the cytoplasm. Part of pre- and post-splicing multiprotein mRNP complexes. Auxiliary component of the splicing-dependent multiprotein exon junction complex (EJC) deposited at splice junction on mRNAs. The EJC is a dynamic structure consisting of core proteins and several peripheral nuclear and cytoplasmic associated factors that join the complex only transiently either during EJC assembly or during subsequent mRNA metabolism. Component of the ASAP and PSAP complexes which bind RNA in a sequence-independent manner and are proposed to be recruited to the EJC prior to or during the splicing process and to regulate specific excision of introns in specific transcription subsets. The ASAP complex can inhibit RNA processing during in vitro splicing reactions. The ASAP complex promotes apoptosis and is disassembled after induction of apoptosis. Enhances the formation of the ATP-dependent A complex of the spliceosome. Involved in both constitutive splicing and, in association with SRP54 and TRA2B/SFRS10, in distinctive modulation of alternative splicing in a substrate-dependent manner. Involved in the splicing modulation of BCL2L1/Bcl-X (and probably other apoptotic genes); specifically inhibits formation of proapoptotic isoforms such as Bcl-X(S); the activity is different from the established EJC assembly and function. Participates in mRNA 3'-end cleavage. Involved in UPF2-dependent nonsense-mediated decay (NMD) of mRNAs containing premature stop codons. Also mediates increase of mRNA abundance and translational efficiency. Binds spliced mRNA 20-25 nt upstream of exon-exon junctions. This is RNA-binding protein with serine-rich domain 1 (RNPS1) from Homo sapiens (Human).